The primary structure comprises 1185 residues: Adhesion G-protein coupled receptor G6 (1185 aa).

Residues 1–32 (MISFISGRWWRWKFQNTLAVFLLLICLSTSVA) form the signal peptide. The Extracellular segment spans residues 33-849 (QSCQSSTSCN…AELIDEKNNR (817 aa)). Cysteine 41 and cysteine 67 are joined by a disulfide. A CUB domain is found at 41 to 149 (CNVVLTDSQG…KGFHISYKQV (109 aa)). Positions 41 to 354 (CNVVLTDSQG…SSTQTDSTLS (314 aa)) are mediates interaction with type IV collagen. Residues 41–839 (CNVVLTDSQG…FGILMDVSRA (799 aa)) are inhibits receptor signaling in absence of type IV collagen. Residue asparagine 68 is glycosylated (N-linked (GlcNAc...) asparagine). 2 residues coordinate Ca(2+): glutamate 89 and aspartate 97. A disulfide bridge links cysteine 94 with cysteine 111. N-linked (GlcNAc...) asparagine glycosylation occurs at asparagine 121. 3 residues coordinate Ca(2+): aspartate 134, serine 136, and valine 137. Residues 154–355 (RNQKVTMPKS…STQTDSTLSC (202 aa)) form the Pentraxin (PTX) domain. 3 disulfide bridges follow: cysteine 185/cysteine 248, cysteine 229/cysteine 271, and cysteine 369/cysteine 375. N-linked (GlcNAc...) asparagine glycans are attached at residues asparagine 395, asparagine 429, asparagine 470, asparagine 539, asparagine 550, asparagine 562, asparagine 565, asparagine 613, asparagine 680, asparagine 691, asparagine 719, asparagine 763, asparagine 799, and asparagine 818. Disulfide bonds link cysteine 508–cysteine 544 and cysteine 532–cysteine 563. Positions 658 to 840 (PSLTISSKNL…GILMDVSRAA (183 aa)) constitute a GAIN-B domain. Cystine bridges form between cysteine 790-cysteine 822 and cysteine 809-cysteine 824. The GPS stretch occupies residues 790 to 840 (CVFWDFNLQNYSGGCNSDGCKVGSDSNSNRTVCLCNHLTHFGILMDVSRAA). A stachel region spans residues 829–837 (HFGILMDVS). Residues 850–870 (VLTFITYIGCGISAIFSAATL) traverse the membrane as a helical segment. At 871–886 (LTYIAFEKLRRDYPSK) the chain is on the cytoplasmic side. Residues 887-907 (ILMNLSTSLLFLNMVFLLDGW) form a helical membrane-spanning segment. Over 908–915 (LASYEIKE) the chain is Extracellular. The helical transmembrane segment at 916–936 (LCVTVAVFLHFFLLTSFTWMG) threads the bilayer. Topologically, residues 937–957 (LESIHMYIALVKVFNTYIRRY) are cytoplasmic. Residues 958–978 (ILKFCIVGWGVPAAIVGIVLA) form a helical membrane-spanning segment. The Extracellular portion of the chain corresponds to 979-1013 (VSKDSYGKNYYGKGKDGQGTSEFCWILNPVVFYVT). A helical membrane pass occupies residues 1014–1034 (CVAYFSIIFLMNVAMFIVVMI). Residues 1035–1057 (QICGRNGKRSNRTLREDILRNLR) are Cytoplasmic-facing. Residues 1058 to 1080 (SVVSLTFLLGMTWGFAFFAWGPV) form a helical membrane-spanning segment. The Extracellular segment spans residues 1081 to 1083 (SLA). A helical transmembrane segment spans residues 1084 to 1106 (FMYLFTIFNSLQGLFIFVFHCAL). Asparagine 1092 lines the 17alpha-hydroxyprogesterone pocket. Topologically, residues 1107–1185 (KENVQKQWRR…RHSNADSTLQ (79 aa)) are cytoplasmic. Residues 1138-1160 (NTKKVSSDNLGKSLSSSSFGSTT) form a disordered region. Residues 1144-1158 (SDNLGKSLSSSSFGS) show a composition bias toward low complexity.

It belongs to the G-protein coupled receptor 2 family. Adhesion G-protein coupled receptor (ADGR) subfamily. Autoproteolytically processed at the GPS region of the GAIN-B domain; this cleavage modulates receptor activity. Expressed in Schwann cells of the posterior lateral line nerve and in brain.

The protein localises to the cell membrane. Its activity is regulated as follows. Forms a heterodimer of 2 chains generated by proteolytic processing that remain associated through non-covalent interactions mediated by the GAIN-B domain. In the inactivated receptor, the Stachel sequence (also named stalk) is embedded in the GAIN-B domain, where it adopts a beta-strand conformation. On activation, the Stachel moves into the 7 transmembrane region and adopts a twisted hook-shaped configuration that forms contacts within the receptor, leading to coupling of a G-alpha protein, which activates signaling. The cleaved GAIN-B and N-terminal domains can then dissociate from the rest of the receptor. Functionally, adhesion G-protein coupled receptor (aGPCR) for steroid hormones, such as progesterone and 17alpha-hydroxyprogesterone (17OHP). Ligand binding causes a conformation change that triggers signaling via guanine nucleotide-binding proteins (G proteins) and modulates the activity of downstream effectors, such as adenylate cyclase. Adgrg6 is coupled to G(i) G alpha proteins and mediates inhibition of adenylate cyclase. Also able to couple to G(q) G proteins. Involved in myelination of the peripheral nervous system: required for differentiation of promyelinating Schwann cells and for normal myelination of axons. G-protein coupled receptor activity can also be activated by type IV collagen, a major constituent of the basement membrane. Also plays a role inner ear development. This Danio rerio (Zebrafish) protein is Adhesion G-protein coupled receptor G6 (adgrg6).